Here is a 442-residue protein sequence, read N- to C-terminus: Trigger factor (442 aa).

A PPIase FKBP-type domain is found at 163–248 (YDRVTINYCI…IIKIEKKQEL (86 aa)).

Belongs to the FKBP-type PPIase family. Tig subfamily.

It is found in the cytoplasm. It carries out the reaction [protein]-peptidylproline (omega=180) = [protein]-peptidylproline (omega=0). In terms of biological role, involved in protein export. Acts as a chaperone by maintaining the newly synthesized protein in an open conformation. Functions as a peptidyl-prolyl cis-trans isomerase. This chain is Trigger factor, found in Buchnera aphidicola subsp. Acyrthosiphon pisum (strain 5A).